A 360-amino-acid chain; its full sequence is Mannitol-1-phosphate 5-dehydrogenase (360 aa).

6–17 (ALHFGAGNIGRG) contacts NAD(+).

This sequence belongs to the mannitol dehydrogenase family.

It catalyses the reaction D-mannitol 1-phosphate + NAD(+) = beta-D-fructose 6-phosphate + NADH + H(+). This Mycoplasmopsis pulmonis (strain UAB CTIP) (Mycoplasma pulmonis) protein is Mannitol-1-phosphate 5-dehydrogenase.